Consider the following 176-residue polypeptide: Co-chaperone protein HscB (176 aa).

The J domain maps to 2–74 (DYFTLFGLPA…LMRAEYLLSL (73 aa)).

This sequence belongs to the HscB family. Interacts with HscA and stimulates its ATPase activity. Interacts with IscU.

Its function is as follows. Co-chaperone involved in the maturation of iron-sulfur cluster-containing proteins. Seems to help targeting proteins to be folded toward HscA. In Escherichia coli O7:K1 (strain IAI39 / ExPEC), this protein is Co-chaperone protein HscB.